Reading from the N-terminus, the 64-residue chain is Beta-defensin 1 (64 aa).

Residues 1–20 (MRLHHLLLVLFFLVLSAGSG) form the signal peptide. The propeptide occupies 21-26 (FTQGIR). Disulfide bonds link cysteine 31–cysteine 60, cysteine 38–cysteine 53, and cysteine 43–cysteine 61.

Belongs to the beta-defensin family. In terms of assembly, monomer. Homodimer.

It is found in the secreted. The protein resides in the membrane. In terms of biological role, has bactericidal activity. May act as a ligand for C-C chemokine receptor CCR6. Positively regulates the sperm motility and bactericidal activity in a CCR6-dependent manner. Binds to CCR6 and triggers Ca2+ mobilization in the sperm which is important for its motility. This chain is Beta-defensin 1 (DEFB1), found in Capra hircus (Goat).